Here is a 519-residue protein sequence, read N- to C-terminus: Acetylcholine receptor subunit beta-like 2 (519 aa).

The N-terminal stretch at 1–18 (MWHWSLLCVFLLVPLANS) is a signal peptide. The Extracellular segment spans residues 19 to 244 (TAPISFEANP…ITFKLTMRRK (226 aa)). N-linked (GlcNAc...) asparagine glycosylation is present at N50. Cysteines 154 and 168 form a disulfide. 3 helical membrane passes run 245 to 269 (TLFYTVNLIVPCVALTFLTVLVFYL), 277 to 295 (VTLCISILVSLTVFFLLLA), and 311 to 332 (YLLFTMILVSLSVWTTVCVLNI). At 333 to 462 (HFRSPSTHNM…WKFVSMVLDR (130 aa)) the chain is on the cytoplasmic side. A helical membrane pass occupies residues 463–481 (FFLWLFTLSCVFGTLAIIC).

The protein belongs to the ligand-gated ion channel (TC 1.A.9) family. Acetylcholine receptor (TC 1.A.9.1) subfamily. As to expression, CNS in embryos.

The protein localises to the postsynaptic cell membrane. It is found in the cell membrane. Its function is as follows. After binding acetylcholine, the AChR responds by an extensive change in conformation that affects all subunits and leads to opening of an ion-conducting channel across the plasma membrane. This is Acetylcholine receptor subunit beta-like 2 (nAChRbeta2) from Drosophila melanogaster (Fruit fly).